A 628-amino-acid polypeptide reads, in one-letter code: Alpha-L-arabinofuranosidase A (628 aa).

Positions 1–25 (MVAFSALSGVSALSLLLCLVQHAHG) are cleaved as a signal peptide. N-linked (GlcNAc...) asparagine glycans are attached at residues Asn36, Asn51, Asn74, Asn152, Asn171, Asn260, Asn359, and Asn493.

It belongs to the glycosyl hydrolase 51 family.

Its subcellular location is the secreted. It carries out the reaction Hydrolysis of terminal non-reducing alpha-L-arabinofuranoside residues in alpha-L-arabinosides.. Its pathway is glycan metabolism; L-arabinan degradation. Its function is as follows. Alpha-L-arabinofuranosidase involved in the degradation of arabinoxylan, a major component of plant hemicellulose. Acts only on small linear 1,5-alpha-linked L-arabinofuranosyl oligosaccharides. The protein is Alpha-L-arabinofuranosidase A (abfA) of Aspergillus kawachii (strain NBRC 4308) (White koji mold).